Consider the following 104-residue polypeptide: Small ribosomal subunit protein uS10 (104 aa).

Belongs to the universal ribosomal protein uS10 family. Part of the 30S ribosomal subunit.

In terms of biological role, involved in the binding of tRNA to the ribosomes. The chain is Small ribosomal subunit protein uS10 from Dichelobacter nodosus (strain VCS1703A).